The primary structure comprises 149 residues: Leghemoglobin (149 aa).

The region spanning 3 to 147 (AFSEKQESLV…LAAAIKKAMG (145 aa)) is the Globin domain. Tyrosine 31 bears the Nitrated tyrosine mark. Serine 46 contacts heme b. Phosphoserine is present on serine 46. Histidine 62 contributes to the O2 binding site. Heme b is bound by residues lysine 65, histidine 94, and lysine 97. Tyrosine 135 carries the nitrated tyrosine modification.

Belongs to the plant globin family. Monomer. Nitrated in effective nodules and particularly in hypoxic conditions; this mechanism may play a protective role in the symbiosis by buffering toxic peroxynitrite NO(2)(-). Nitration level decrease during nodule senescence. In terms of processing, phosphorylation at Ser-46 disrupts the molecular environment of its porphyrin ring oxygen binding pocket, thus leading to a reduced oxygen consumption and to the delivery of oxygen O(2) to symbiosomes. As to expression, root nodules.

Its subcellular location is the cytoplasm. It is found in the cytosol. The protein resides in the nucleus. Leghemoglobin that reversibly binds oxygen O(2) through a pentacoordinated heme iron. In root nodules, facilitates the diffusion of oxygen to the bacteroids while preventing the bacterial nitrogenase from being inactivated by buffering dioxygen, nitric oxide and carbon monoxide, and promoting the formation of reactive oxygen species (ROS, e.g. H(2)O(2)). This role is essential for symbiotic nitrogen fixation (SNF). This Canavalia lineata (Beach bean) protein is Leghemoglobin.